Here is a 295-residue protein sequence, read N- to C-terminus: Aspartate carbamoyltransferase catalytic subunit (295 aa).

Arginine 49 and threonine 50 together coordinate carbamoyl phosphate. Lysine 77 is an L-aspartate binding site. Residues arginine 99, histidine 127, and glutamine 130 each contribute to the carbamoyl phosphate site. L-aspartate is bound by residues arginine 161 and arginine 212. Residues glycine 251 and proline 252 each coordinate carbamoyl phosphate.

Belongs to the aspartate/ornithine carbamoyltransferase superfamily. ATCase family. As to quaternary structure, heterododecamer (2C3:3R2) of six catalytic PyrB chains organized as two trimers (C3), and six regulatory PyrI chains organized as three dimers (R2).

The catalysed reaction is carbamoyl phosphate + L-aspartate = N-carbamoyl-L-aspartate + phosphate + H(+). The protein operates within pyrimidine metabolism; UMP biosynthesis via de novo pathway; (S)-dihydroorotate from bicarbonate: step 2/3. Catalyzes the condensation of carbamoyl phosphate and aspartate to form carbamoyl aspartate and inorganic phosphate, the committed step in the de novo pyrimidine nucleotide biosynthesis pathway. This Campylobacter jejuni subsp. jejuni serotype O:2 (strain ATCC 700819 / NCTC 11168) protein is Aspartate carbamoyltransferase catalytic subunit.